Consider the following 707-residue polypeptide: Protein MICRORCHIDIA 7 (707 aa).

Composition is skewed to basic and acidic residues over residues 1–11 (MDNSIHVKREI) and 575–587 (DNRDSSPENDREG). Disordered regions lie at residues 1-22 (MDNSIHVKREIQLPSTSPAGFP) and 568-619 (EKSA…SGKD). Residues 590-613 (SIKTPTPASDKFYSSSYPNHNGDN) show a composition bias toward polar residues. The stretch at 620-701 (GARLQEELRR…NKIKKMEGSK (82 aa)) forms a coiled coil. The Nuclear localization signal signature appears at 633-640 (RRKALEVE).

It belongs to the MORC ATPase protein family. In terms of assembly, homodimer and heterodimer. Component of an RNA-directed DNA methylation (RdDM) complex. Forms homomeric complexes. It depends on Mg(2+) as a cofactor. Mn(2+) is required as a cofactor.

The protein resides in the nucleus. Its function is as follows. Exhibits ATPase activity. Binds DNA/RNA in a non-specific manner and exhibits endonuclease activity. Probably involved in DNA repair. Involved in RNA-directed DNA methylation (RdDM) as a component of the RdDM machinery and required for gene silencing. May also be involved in the regulation of chromatin architecture to maintain gene silencing. Together with MORC4, acts to suppress a wide set of non-methylated protein-coding genes, especially involved in pathogen response. Positive regulators of defense against the oomycete Hyaloperonospora arabidopsidis (Hpa). The sequence is that of Protein MICRORCHIDIA 7 from Arabidopsis thaliana (Mouse-ear cress).